We begin with the raw amino-acid sequence, 295 residues long: sn-glycerol-3-phosphate transport system permease protein UgpA (295 aa).

The Cytoplasmic portion of the chain corresponds to 1 to 11 (MSSSRPVFRSR). Residues 12–32 (WLPYLLVAPQLVITVIFFIWP) form a helical membrane-spanning segment. Over 33-80 (AGEALWYSLQSVDPFGFSSQFVGLENFVALFHDSYYLDAFWTTIKFSA) the chain is Periplasmic. The 209-residue stretch at 76 to 284 (IKFSALVTFS…FLVIILTVVQ (209 aa)) folds into the ABC transmembrane type-1 domain. Residues 81–101 (LVTFSGLLVSLFFAALVDYVV) traverse the membrane as a helical segment. The Cytoplasmic portion of the chain corresponds to 102–109 (RGSRFYQT). The helical transmembrane segment at 110 to 130 (LMLLPYAVAPAVAAVLWIFLF) threads the bilayer. Topologically, residues 131 to 157 (NPGRGLITHFLGEFGYDWNHAQNSGQA) are periplasmic. A helical transmembrane segment spans residues 158–178 (MFLVVFASVWKQISYNFLFFF). Residues 179–207 (AALQSIPRSLVEAAAIDGAGPIRRFFRLS) are Cytoplasmic-facing. Residues 208-228 (LPLIAPVSFFLLVVNLVYAFF) form a helical membrane-spanning segment. The Periplasmic portion of the chain corresponds to 229-262 (DTFPVIDAATAGGPVQATTTLIYKIYCEGFTGLD). The chain crosses the membrane as a helical span at residues 263–283 (LSASAAQSVVLMFLVIILTVV). Residues 284 to 295 (QFRYVESKVRYQ) are Cytoplasmic-facing.

The protein belongs to the binding-protein-dependent transport system permease family. UgpAE subfamily. As to quaternary structure, the complex is composed of two ATP-binding proteins (UgpC), two transmembrane proteins (UgpA and UgpE) and a solute-binding protein (UgpB).

The protein resides in the cell inner membrane. Functionally, part of the ABC transporter complex UgpBAEC involved in sn-glycerol-3-phosphate (G3P) import. Probably responsible for the translocation of the substrate across the membrane. The sequence is that of sn-glycerol-3-phosphate transport system permease protein UgpA (ugpA) from Salmonella typhi.